A 203-amino-acid polypeptide reads, in one-letter code: Holliday junction branch migration complex subunit RuvA (203 aa).

Positions 1–64 (MIGRLRGIIL…EDAQLLYGFN (64 aa)) are domain I. The segment at 65–142 (NKQERTLFKE…KGLHGDLFTP (78 aa)) is domain II. The tract at residues 143-154 (AADLVLTSPASP) is flexible linker. The interval 155–203 (ATDDAEQEAVAALVALGYKPQEASRMVSKIARPDASSETLIREALRAAL) is domain III.

This sequence belongs to the RuvA family. As to quaternary structure, homotetramer. Forms an RuvA(8)-RuvB(12)-Holliday junction (HJ) complex. HJ DNA is sandwiched between 2 RuvA tetramers; dsDNA enters through RuvA and exits via RuvB. An RuvB hexamer assembles on each DNA strand where it exits the tetramer. Each RuvB hexamer is contacted by two RuvA subunits (via domain III) on 2 adjacent RuvB subunits; this complex drives branch migration. In the full resolvosome a probable DNA-RuvA(4)-RuvB(12)-RuvC(2) complex forms which resolves the HJ.

Its subcellular location is the cytoplasm. The RuvA-RuvB-RuvC complex processes Holliday junction (HJ) DNA during genetic recombination and DNA repair, while the RuvA-RuvB complex plays an important role in the rescue of blocked DNA replication forks via replication fork reversal (RFR). RuvA specifically binds to HJ cruciform DNA, conferring on it an open structure. The RuvB hexamer acts as an ATP-dependent pump, pulling dsDNA into and through the RuvAB complex. HJ branch migration allows RuvC to scan DNA until it finds its consensus sequence, where it cleaves and resolves the cruciform DNA. The protein is Holliday junction branch migration complex subunit RuvA of Citrobacter koseri (strain ATCC BAA-895 / CDC 4225-83 / SGSC4696).